The following is a 217-amino-acid chain: Thymidylate kinase (217 aa).

7–14 (GIDGAGKS) is an ATP binding site.

The protein belongs to the thymidylate kinase family.

The enzyme catalyses dTMP + ATP = dTDP + ADP. Functionally, phosphorylation of dTMP to form dTDP in both de novo and salvage pathways of dTTP synthesis. The sequence is that of Thymidylate kinase from Chlorobaculum parvum (strain DSM 263 / NCIMB 8327) (Chlorobium vibrioforme subsp. thiosulfatophilum).